Reading from the N-terminus, the 138-residue chain is MINKTRHNARRYALQALYQWFFCETKPDALISQFMEEHDLSDTDVAYFKEVVTGTIQHVAIIDELMTAHLDRKISALNPVELSVLRLSIYELLHRKEVPYKVVIDEALELVKEFGAEAGHKYVNAILDVLSSEIRKGV.

Belongs to the NusB family.

In terms of biological role, involved in transcription antitermination. Required for transcription of ribosomal RNA (rRNA) genes. Binds specifically to the boxA antiterminator sequence of the ribosomal RNA (rrn) operons. The sequence is that of Transcription antitermination protein NusB from Coxiella burnetii (strain Dugway 5J108-111).